The following is an 86-amino-acid chain: Small ribosomal subunit protein bS16 (86 aa).

This sequence belongs to the bacterial ribosomal protein bS16 family.

This chain is Small ribosomal subunit protein bS16, found in Mycoplasmoides gallisepticum (strain R(low / passage 15 / clone 2)) (Mycoplasma gallisepticum).